The sequence spans 404 residues: Tryptophan synthase beta chain (404 aa).

Lysine 90 bears the N6-(pyridoxal phosphate)lysine mark.

This sequence belongs to the TrpB family. As to quaternary structure, tetramer of two alpha and two beta chains. The cofactor is pyridoxal 5'-phosphate.

It carries out the reaction (1S,2R)-1-C-(indol-3-yl)glycerol 3-phosphate + L-serine = D-glyceraldehyde 3-phosphate + L-tryptophan + H2O. It participates in amino-acid biosynthesis; L-tryptophan biosynthesis; L-tryptophan from chorismate: step 5/5. Functionally, the beta subunit is responsible for the synthesis of L-tryptophan from indole and L-serine. The polypeptide is Tryptophan synthase beta chain (trpB) (Geobacillus stearothermophilus (Bacillus stearothermophilus)).